Here is a 254-residue protein sequence, read N- to C-terminus: 5-oxoprolinase subunit A (254 aa).

This sequence belongs to the LamB/PxpA family. In terms of assembly, forms a complex composed of PxpA, PxpB and PxpC.

The enzyme catalyses 5-oxo-L-proline + ATP + 2 H2O = L-glutamate + ADP + phosphate + H(+). Catalyzes the cleavage of 5-oxoproline to form L-glutamate coupled to the hydrolysis of ATP to ADP and inorganic phosphate. The polypeptide is 5-oxoprolinase subunit A (Carboxydothermus hydrogenoformans (strain ATCC BAA-161 / DSM 6008 / Z-2901)).